The primary structure comprises 405 residues: S-adenosylmethionine synthase (405 aa).

H22 serves as a coordination point for ATP. Position 24 (D24) interacts with Mg(2+). Residue E50 coordinates K(+). L-methionine contacts are provided by E63 and Q107. Residues 107–117 (QSPDIAQGVDR) are flexible loop. ATP contacts are provided by residues 184 to 186 (DGK), 250 to 251 (RF), D259, 265 to 266 (RK), A282, and K286. D259 serves as a coordination point for L-methionine. K290 provides a ligand contact to L-methionine.

It belongs to the AdoMet synthase family. In terms of assembly, homotetramer; dimer of dimers. Mg(2+) serves as cofactor. It depends on K(+) as a cofactor.

The protein localises to the cytoplasm. The catalysed reaction is L-methionine + ATP + H2O = S-adenosyl-L-methionine + phosphate + diphosphate. The protein operates within amino-acid biosynthesis; S-adenosyl-L-methionine biosynthesis; S-adenosyl-L-methionine from L-methionine: step 1/1. Its function is as follows. Catalyzes the formation of S-adenosylmethionine (AdoMet) from methionine and ATP. The overall synthetic reaction is composed of two sequential steps, AdoMet formation and the subsequent tripolyphosphate hydrolysis which occurs prior to release of AdoMet from the enzyme. The protein is S-adenosylmethionine synthase of Roseiflexus sp. (strain RS-1).